Reading from the N-terminus, the 130-residue chain is Small ribosomal subunit protein uS11 (130 aa).

The protein belongs to the universal ribosomal protein uS11 family. As to quaternary structure, part of the 30S ribosomal subunit. Interacts with proteins S7 and S18. Binds to IF-3.

Located on the platform of the 30S subunit, it bridges several disparate RNA helices of the 16S rRNA. Forms part of the Shine-Dalgarno cleft in the 70S ribosome. This Psychrobacter sp. (strain PRwf-1) protein is Small ribosomal subunit protein uS11.